Here is a 338-residue protein sequence, read N- to C-terminus: Tryptophan--tRNA ligase (338 aa).

ATP-binding positions include 11 to 13 and 19 to 20; these read QPS and GN. The 'HIGH' region signature appears at 12 to 20; sequence PSGELSIGN. Aspartate 135 is an L-tryptophan binding site. ATP-binding positions include 147-149, valine 189, and 198-202; these read GSD and KMSKS. The 'KMSKS' region motif lies at 198-202; it reads KMSKS.

The protein belongs to the class-I aminoacyl-tRNA synthetase family. In terms of assembly, homodimer.

It localises to the cytoplasm. The catalysed reaction is tRNA(Trp) + L-tryptophan + ATP = L-tryptophyl-tRNA(Trp) + AMP + diphosphate + H(+). Functionally, catalyzes the attachment of tryptophan to tRNA(Trp). In Vibrio parahaemolyticus serotype O3:K6 (strain RIMD 2210633), this protein is Tryptophan--tRNA ligase.